Consider the following 34-residue polypeptide: Potassium channel toxin alpha-KTx 6.13 (34 aa).

Cystine bridges form between Cys-3-Cys-24, Cys-9-Cys-29, Cys-13-Cys-31, and Cys-19-Cys-34. Cys-34 bears the Cysteine amide mark.

This sequence belongs to the short scorpion toxin superfamily. Potassium channel inhibitor family. Alpha-KTx 06 subfamily. Expressed by the venom gland.

The protein resides in the secreted. In terms of biological role, antagonist of Kv1/KCNA potassium channels. Shows a weak interaction with muscle-type nicotinic acetylcholine receptors (nAChR), since it inhibits alpha-bungarotoxin binding to both muscle-type nAChR from T.californica (IC(50)=490 nM). This suggests it probably weakly inhibits nAChR. The sequence is that of Potassium channel toxin alpha-KTx 6.13 from Heterometrus spinifer (Asia giant forest scorpion).